Consider the following 391-residue polypeptide: Sulfate adenylyltransferase (391 aa).

This sequence belongs to the sulfate adenylyltransferase family.

The catalysed reaction is sulfate + ATP + H(+) = adenosine 5'-phosphosulfate + diphosphate. The protein operates within sulfur metabolism; hydrogen sulfide biosynthesis; sulfite from sulfate: step 1/3. In Lactiplantibacillus plantarum (strain ATCC BAA-793 / NCIMB 8826 / WCFS1) (Lactobacillus plantarum), this protein is Sulfate adenylyltransferase.